The primary structure comprises 594 residues: RAS guanyl-releasing protein 2-B (594 aa).

The N-terminal Ras-GEF domain occupies 3-121 (SSDLDKGLTI…SLIDIESVPS (119 aa)). Residues 149–382 (DPAELAEHLT…YQLSLQREPR (234 aa)) form the Ras-GEF domain. The interval 377-403 (LQREPRARSTQTHAKSPPSPSPPLEEW) is disordered. 2 consecutive EF-hand domains span residues 418–453 (HIEK…FPYL) and 455–482 (AFNE…ASSV). Ca(2+) contacts are provided by D431, D433, D435, H437, E442, D460, N462, D464, K466, and E471. A Phorbol-ester/DAG-type zinc finger spans residues 490 to 540 (IHNFAERTFLRPVSCQHCRNLILGIYKKGLKCKACGITCHKHCRDHLSIEC).

It belongs to the RASGRP family.

Its subcellular location is the cytoplasm. The protein resides in the cytosol. The protein localises to the cell membrane. It localises to the synapse. It is found in the synaptosome. Functionally, functions as a calcium- and DAG-regulated nucleotide exchange factor specifically activating Rap through the exchange of bound GDP for GTP. May function in cell aggregation and adhesion. The chain is RAS guanyl-releasing protein 2-B (rasgrp2-b) from Xenopus laevis (African clawed frog).